The sequence spans 1028 residues: RNA cytidine acetyltransferase 1 (1028 aa).

ATP is bound by residues 286–295 (GRGKSAALGL) and Arg460. An N-acetyltransferase domain is found at 548-731 (VLLGPVDESK…FAPFYISQIP (184 aa)). Residues 619–621 (IAV), 626–632 (MKMGYGS), and Lys719 contribute to the acetyl-CoA site. A disordered region spans residues 989–1028 (ISIESTKTDNKKEKPSGFDKSAKKRGNDKHSSTSNKKRRA). The segment covering 994–1009 (TKTDNKKEKPSGFDKS) has biased composition (basic and acidic residues).

Belongs to the RNA cytidine acetyltransferase family. NAT10 subfamily.

The protein localises to the nucleus. It localises to the nucleolus. The catalysed reaction is a cytidine in 18S rRNA + acetyl-CoA + ATP + H2O = an N(4)-acetylcytidine in 18S rRNA + ADP + phosphate + CoA + H(+). It carries out the reaction a cytidine in tRNA + acetyl-CoA + ATP + H2O = an N(4)-acetylcytidine in tRNA + ADP + phosphate + CoA + H(+). In terms of biological role, RNA cytidine acetyltransferase with specificity toward both 18S rRNA and tRNAs. Catalyzes the formation of N(4)-acetylcytidine (ac4C) in 18S rRNA. Required for early nucleolar cleavages of precursor rRNA at sites A0, A1 and A2 during 18S rRNA synthesis. Catalyzes the formation of ac4C in serine and leucine tRNAs. Requires a tRNA-binding adapter protein for full tRNA acetyltransferase activity but not for 18S rRNA acetylation. The sequence is that of RNA cytidine acetyltransferase 1 from Arabidopsis thaliana (Mouse-ear cress).